The chain runs to 201 residues: Fas apoptotic inhibitory molecule 1 (201 aa).

This sequence belongs to the FAIM1 family.

Its subcellular location is the cytoplasm. Its function is as follows. Plays a role as an inducible effector molecule that mediates Fas resistance produced by surface Ig engagement in B cells. This Rattus norvegicus (Rat) protein is Fas apoptotic inhibitory molecule 1 (Faim).